Reading from the N-terminus, the 216-residue chain is Imidazoleglycerol-phosphate dehydratase (216 aa).

Phosphoserine is present on S211.

Belongs to the imidazoleglycerol-phosphate dehydratase family.

The catalysed reaction is D-erythro-1-(imidazol-4-yl)glycerol 3-phosphate = 3-(imidazol-4-yl)-2-oxopropyl phosphate + H2O. The protein operates within amino-acid biosynthesis; L-histidine biosynthesis; L-histidine from 5-phospho-alpha-D-ribose 1-diphosphate: step 6/9. This chain is Imidazoleglycerol-phosphate dehydratase (his5), found in Schizosaccharomyces pombe (strain 972 / ATCC 24843) (Fission yeast).